A 373-amino-acid chain; its full sequence is UDP-N-acetylglucosamine--N-acetylmuramyl-(pentapeptide) pyrophosphoryl-undecaprenol N-acetylglucosamine transferase (373 aa).

Residues 15-17 (TGG), Asn-126, Arg-170, Ser-198, and Gln-300 contribute to the UDP-N-acetyl-alpha-D-glucosamine site.

This sequence belongs to the glycosyltransferase 28 family. MurG subfamily.

Its subcellular location is the cell inner membrane. It carries out the reaction di-trans,octa-cis-undecaprenyl diphospho-N-acetyl-alpha-D-muramoyl-L-alanyl-D-glutamyl-meso-2,6-diaminopimeloyl-D-alanyl-D-alanine + UDP-N-acetyl-alpha-D-glucosamine = di-trans,octa-cis-undecaprenyl diphospho-[N-acetyl-alpha-D-glucosaminyl-(1-&gt;4)]-N-acetyl-alpha-D-muramoyl-L-alanyl-D-glutamyl-meso-2,6-diaminopimeloyl-D-alanyl-D-alanine + UDP + H(+). The protein operates within cell wall biogenesis; peptidoglycan biosynthesis. Cell wall formation. Catalyzes the transfer of a GlcNAc subunit on undecaprenyl-pyrophosphoryl-MurNAc-pentapeptide (lipid intermediate I) to form undecaprenyl-pyrophosphoryl-MurNAc-(pentapeptide)GlcNAc (lipid intermediate II). The chain is UDP-N-acetylglucosamine--N-acetylmuramyl-(pentapeptide) pyrophosphoryl-undecaprenol N-acetylglucosamine transferase from Methylobacterium nodulans (strain LMG 21967 / CNCM I-2342 / ORS 2060).